A 764-amino-acid chain; its full sequence is Bifunctional type I diterpene synthase tndC (764 aa).

Positions 1 to 324 (MEYRYSTVVD…CPRYHPWSSY (324 aa)) are terpene cyclase. Mg(2+) contacts are provided by Asp-92 and Asp-96. The short motif at 92–96 (DDVTD) is the DDXXD 1 element. The NSE/DTE signature appears at 224-232 (NDLYSWQKE). The tract at residues 325–761 (NERQLDWMKN…FQLRLILEML (437 aa)) is prenyltransferase. The segment at 377–403 (AVNGNGASHTSSIKGSTGGNGVTHSPV) is disordered. Residues 381 to 391 (NGASHTSSIKG) show a composition bias toward polar residues. Positions 484, 487, and 516 each coordinate isopentenyl diphosphate. Mg(2+) contacts are provided by Asp-523 and Asp-527. Residues 523–527 (DDLED) carry the DDXXD 2 motif. Arg-532 is a binding site for dimethylallyl diphosphate. Position 533 (Arg-533) interacts with isopentenyl diphosphate. Positions 610, 611, 646, 653, 663, and 673 each coordinate dimethylallyl diphosphate.

In the N-terminal section; belongs to the terpene synthase family. This sequence in the C-terminal section; belongs to the FPP/GGPP synthase family.

The enzyme catalyses isopentenyl diphosphate + (2E,6E)-farnesyl diphosphate = (2E,6E,10E)-geranylgeranyl diphosphate + diphosphate. It carries out the reaction (2E,6E,10E)-geranylgeranyl diphosphate = talarodiene + diphosphate. It participates in secondary metabolite biosynthesis; terpenoid biosynthesis. In terms of biological role, bifunctional type I diterpene synthase; part of the gene cluster that mediates the biosynthesis of talaronoid C, a fusicoccane diterpenoid with an unprecedented tricyclic 5/8/6 ring system. The first step in the pathway is performed by the fusicoccadiene synthase tndC that possesses both prenyl transferase and terpene cyclase activity, converting isopentenyl diphosphate and dimethylallyl diphosphate into geranylgeranyl diphosphate (GGDP) and further converting GGDP into talarodiene, a precursor for talaronoid C. The remaining enzymes from the cluster include the cytochrome P450 monooxygenase tndB, the aldehyde reductase tndE and the alcohol dehydrogenase tndF that are involved in the conversion of talarodiene into talaronoid C. This Aspergillus flavipes protein is Bifunctional type I diterpene synthase tndC.